The sequence spans 875 residues: MKSAEIREAFLQYFESKGHSRVASSSLVPGNDPTLLFTNAGMVQFKDVFLGQDNRSYSRATSSQRCVRAGGKHNDLENVGYTARHHTFFEMLGNFSFGDYFKKDAINYAWEFLTSKEWLAIPTEKLCVTVYADDDEAYGIWANDVGVPEDRIIRIGDNKGGRYNSDNFWAMGDTGPCGPCTEIFYDHGEHIWGGRPGTPEEDGDRFIEIWNVVFMQFNRSVDGEMAPLPKPSVDTGMGLERIAAVMQHVHSNYEIDLFQALLEAAAQATQAEDKDAKSLRVIADHIRSCAFLVSDGVLPSNEGRGYVLRRIIRRAVRHGNKLGQTKPFFHTLVAALVEQMGEAYPELVRDQASIEKVLAAEEDQFAKTLEKGMVVLESALSELKGTIIPGEVIFTLYDTYGFPVDLTNDIARERELTLDMDGYDALMEQQKKRARESGSFKVDYSATATIEGHTNFVGYSELTGDASVTAILVDGENVDTLTEGQSGVIVLDTTPFYGESGGQAGDTGYIVFDGAKFEVQDCQKSGANHLHVGQLLAGAVKVGDKAQPVVDSAVRQATALNHSATHLLHAALRKVLGEHVTQKGSLVDSERLRFDFSHFEAVKPEELKQIESMVNEQIRLNSPVETELCDMEAAQQKGAMALFGEKYGDEVRVLSMGGAFSVELCGGTHVSRTGDIGLIRITSESGIASGVRRIEAVTGEKALSVIDASADTLNAAAKLLKASPENLLDKVEQLIAQNRQLEKSLAAAKSKLASSSADEWLSEATDIAGVKVLAKAVEGVDAKSLRDMMDKLKNKLGTSAVILASVNDDKISLVAGVSQDATSKIKAGDMVKHVAGLIGGKGGGRPDMAQGGGTDVEALPAAIGSVLDWAKGVIG.

Positions 562, 566, 665, and 669 each coordinate Zn(2+).

Belongs to the class-II aminoacyl-tRNA synthetase family. Zn(2+) is required as a cofactor.

It is found in the cytoplasm. It carries out the reaction tRNA(Ala) + L-alanine + ATP = L-alanyl-tRNA(Ala) + AMP + diphosphate. In terms of biological role, catalyzes the attachment of alanine to tRNA(Ala) in a two-step reaction: alanine is first activated by ATP to form Ala-AMP and then transferred to the acceptor end of tRNA(Ala). Also edits incorrectly charged Ser-tRNA(Ala) and Gly-tRNA(Ala) via its editing domain. The protein is Alanine--tRNA ligase of Saccharophagus degradans (strain 2-40 / ATCC 43961 / DSM 17024).